We begin with the raw amino-acid sequence, 84 residues long: RNA-binding protein Hfq (84 aa).

The region spanning 11-71 (DTFLNFVRKN…ISTIMPGAPI (61 aa)) is the Sm domain.

The protein belongs to the Hfq family. In terms of assembly, homohexamer.

Its function is as follows. RNA chaperone that binds small regulatory RNA (sRNAs) and mRNAs to facilitate mRNA translational regulation in response to envelope stress, environmental stress and changes in metabolite concentrations. Also binds with high specificity to tRNAs. This chain is RNA-binding protein Hfq, found in Beijerinckia indica subsp. indica (strain ATCC 9039 / DSM 1715 / NCIMB 8712).